The primary structure comprises 459 residues: METYDIAIIGTGSGNSILDERYASKRAAICEQGTFGGTCLNVGCIPTKMFVYAAEVAKTIRGASRYGIDAHIDRVRWDDVVSRVFGRIDPIALSGEDYRRCAPNIDVYRTHTRFGPVQADGRYLLRTDAGEEFTAEQVVIAAGSRPVIPPAILASGVDYHTSDTVMRIAELPEHIVIVGSGFIAAEFAHVFSALGVRVTLVIRGSCLLRHCDDTICERFTRIASTKWELRTHRNVVDGQQRGSGVALRLDDGCTINADLLLVATGRVSNADLLDAEQAGVDVEDGRVIVDEYQRTSARGVFALGDVSSPYLLKHVANHEARVVQHNLLCDWEDTQSMIVTDHRYVPAAVFTDPQIAAVGLTENQAVAKGLDISVKIQDYGDVAYGWAMEDTSGIVKLITERGSGRLLGAHIMGYQASSLIQPLIQAMSFGLTAAEMARGQYWIHPALPEVVENALLGLR.

31–39 (EQGTFGGTC) contacts FAD. An intrachain disulfide couples Cys39 to Cys44. His444 serves as the catalytic Proton acceptor.

The protein belongs to the class-I pyridine nucleotide-disulfide oxidoreductase family. Homodimer. FAD is required as a cofactor.

It carries out the reaction 2 mycothiol + NADP(+) = mycothione + NADPH + H(+). The enzyme catalyses 2 mycothiol + NAD(+) = mycothione + NADH + H(+). Catalyzes the NAD(P)H-dependent reduction of mycothione (the oxidized disulfide form of mycothiol) to mycothiol. This is Mycothione reductase (mtr) from Mycobacterium tuberculosis (strain CDC 1551 / Oshkosh).